Reading from the N-terminus, the 372-residue chain is METLWTLLYLLEPAPATLIVTAVTVTFASAFRALNYGKEMERNRDFSEASITLDSSQALMIPVMSSCSLLLMFYLFSSVSQLLTAFTAIASVSSLFYWLSPYAVYMKTQLGLSDPFLSRCCSKSFTRIQGLLLVACAMTVVAWLISGHWVLNNLLGISICIAFVSHVRLPNIKICAMLLVCLFVYDIFWVFFSERFFGANVMVAVATQQASNPVHTVANSLNLPGLQLITKKLELPVKIVFPRNLLGGVVPGVSASDFMMLGLGDMAIPAMLLALVLCFDHRKTRDVVNIFDLKSSKGHKYIWYALPGYAIGLVAALAAGVLTHSPQPALLYLVPSTLGPVIFMSWRRKDLAELWEGPALSNPIEKSHEIEI.

Residues 1 to 6 lie on the Lumenal side of the membrane; it reads METLWT. Residues 7-27 form a helical membrane-spanning segment; sequence LLYLLEPAPATLIVTAVTVTF. Topologically, residues 28–54 are cytoplasmic; that stretch reads ASAFRALNYGKEMERNRDFSEASITLD. Residues 55 to 77 form a helical membrane-spanning segment; that stretch reads SSQALMIPVMSSCSLLLMFYLFS. Residues 78–81 are Lumenal-facing; sequence SVSQ. Residues 82–104 form a helical membrane-spanning segment; the sequence is LLTAFTAIASVSSLFYWLSPYAV. Topologically, residues 105-123 are cytoplasmic; sequence YMKTQLGLSDPFLSRCCSK. Residues 124–146 form a helical membrane-spanning segment; the sequence is SFTRIQGLLLVACAMTVVAWLIS. Residues 147–149 are Lumenal-facing; it reads GHW. A helical transmembrane segment spans residues 150–167; the sequence is VLNNLLGISICIAFVSHV. At 168 to 171 the chain is on the cytoplasmic side; it reads RLPN. The helical transmembrane segment at 172 to 192 threads the bilayer; that stretch reads IKICAMLLVCLFVYDIFWVFF. Asp-186 is an active-site residue. Residues 193-257 are Lumenal-facing; that stretch reads SERFFGANVM…GVVPGVSASD (65 aa). Residues 258 to 278 form a helical membrane-spanning segment; it reads FMMLGLGDMAIPAMLLALVLC. Residue Asp-265 is part of the active site. At 279 to 301 the chain is on the cytoplasmic side; sequence FDHRKTRDVVNIFDLKSSKGHKY. Residues 302–322 form a helical membrane-spanning segment; sequence IWYALPGYAIGLVAALAAGVL. The Lumenal segment spans residues 323 to 325; it reads THS. Residues 326-346 traverse the membrane as a helical segment; sequence PQPALLYLVPSTLGPVIFMSW. The PAL motif lies at 328–330; it reads PAL. Over 347 to 372 the chain is Cytoplasmic; the sequence is RRKDLAELWEGPALSNPIEKSHEIEI.

This sequence belongs to the peptidase A22B family. In terms of tissue distribution, ubiquitous.

Its subcellular location is the endosome membrane. Its function is as follows. Intramembrane-cleaving aspartic protease (I-CLiP) that cleaves type II membrane signal peptides in the hydrophobic plane of the membrane. This Arabidopsis thaliana (Mouse-ear cress) protein is Signal peptide peptidase-like 1 (SPPL1).